An 88-amino-acid chain; its full sequence is Apolipoprotein C-I (88 aa).

The signal sequence occupies residues 1–26 (MRLFLSLPVLVVVLAMVLEGPAPTQA).

The protein belongs to the apolipoprotein C1 family.

The protein resides in the secreted. In terms of biological role, inhibitor of lipoprotein binding to the low density lipoprotein (LDL) receptor, LDL receptor-related protein, and very low density lipoprotein (VLDL) receptor. Associates with high density lipoproteins (HDL) and the triacylglycerol-rich lipoproteins in the plasma and makes up about 10% of the protein of the VLDL and 2% of that of HDL. Appears to interfere directly with fatty acid uptake and is also the major plasma inhibitor of cholesteryl ester transfer protein (CETP). Binds free fatty acids and reduces their intracellular esterification. Modulates the interaction of APOE with beta-migrating VLDL and inhibits binding of beta-VLDL to the LDL receptor-related protein. The polypeptide is Apolipoprotein C-I (APOC1) (Mirounga angustirostris (Northern elephant seal)).